A 293-amino-acid chain; its full sequence is Ribosomal RNA small subunit methyltransferase H (293 aa).

Residues 32–34 (GGH), aspartate 51, phenylalanine 78, aspartate 99, and glutamine 106 each bind S-adenosyl-L-methionine. Residues 271-293 (PGTEEIRENPPSRSAKLRVAKRI) form a disordered region.

This sequence belongs to the methyltransferase superfamily. RsmH family.

Its subcellular location is the cytoplasm. The enzyme catalyses cytidine(1402) in 16S rRNA + S-adenosyl-L-methionine = N(4)-methylcytidine(1402) in 16S rRNA + S-adenosyl-L-homocysteine + H(+). Functionally, specifically methylates the N4 position of cytidine in position 1402 (C1402) of 16S rRNA. The protein is Ribosomal RNA small subunit methyltransferase H of Persephonella marina (strain DSM 14350 / EX-H1).